The following is a 258-amino-acid chain: Small ribosomal subunit protein mS40 (258 aa).

A mitochondrion-targeting transit peptide spans 1-35 (MAASVLNVLLRRLPYFSPFRGAYGVQVPLQTLCTK). At Ser49 the chain carries Phosphoserine. Residues 221 to 258 (QGHLREESGPPPESMPKVPLTAPNEATSTEQAGPQSAL) form a disordered region. The span at 244–258 (NEATSTEQAGPQSAL) shows a compositional bias: polar residues.

Belongs to the bacterial ribosomal protein bS18 family. Mitochondrion-specific ribosomal protein mS40 subfamily. Component of the mitochondrial ribosome small subunit (28S) which comprises a 12S rRNA and about 30 distinct proteins.

It localises to the mitochondrion. This is Small ribosomal subunit protein mS40 from Bos taurus (Bovine).